Consider the following 271-residue polypeptide: Formamidopyrimidine-DNA glycosylase (271 aa).

Pro2 serves as the catalytic Schiff-base intermediate with DNA. Glu3 (proton donor) is an active-site residue. The active-site Proton donor; for beta-elimination activity is Lys58. Residues His91, Arg110, and Arg152 each coordinate DNA. Residues 237–271 (SVYGRNDAPCPGCGAPIRRSRQGGRSTYFCDRCQH) form an FPG-type zinc finger. Arg261 functions as the Proton donor; for delta-elimination activity in the catalytic mechanism.

This sequence belongs to the FPG family. As to quaternary structure, monomer. It depends on Zn(2+) as a cofactor.

It carries out the reaction Hydrolysis of DNA containing ring-opened 7-methylguanine residues, releasing 2,6-diamino-4-hydroxy-5-(N-methyl)formamidopyrimidine.. The enzyme catalyses 2'-deoxyribonucleotide-(2'-deoxyribose 5'-phosphate)-2'-deoxyribonucleotide-DNA = a 3'-end 2'-deoxyribonucleotide-(2,3-dehydro-2,3-deoxyribose 5'-phosphate)-DNA + a 5'-end 5'-phospho-2'-deoxyribonucleoside-DNA + H(+). In terms of biological role, involved in base excision repair of DNA damaged by oxidation or by mutagenic agents. Acts as a DNA glycosylase that recognizes and removes damaged bases. Has a preference for oxidized purines, such as 7,8-dihydro-8-oxoguanine (8-oxoG). Has AP (apurinic/apyrimidinic) lyase activity and introduces nicks in the DNA strand. Cleaves the DNA backbone by beta-delta elimination to generate a single-strand break at the site of the removed base with both 3'- and 5'-phosphates. In Geotalea uraniireducens (strain Rf4) (Geobacter uraniireducens), this protein is Formamidopyrimidine-DNA glycosylase.